The chain runs to 246 residues: MyoD family inhibitor (246 aa).

2 disordered regions span residues 1–76 and 91–151; these read MYQV…LDST and GNPL…SKST. Residues 14–26 are compositionally biased toward low complexity; it reads APYGAPSAAPGPA. The MDFI domain occupies 99–246; sequence LLPNDSGHPS…MECCGLCFSS (148 aa).

The protein belongs to the MDFI family. Interacts (via C-terminus) with AXIN1 and LEF1. Interacts with CCNT2. Interacts (via C-terminus) with Piezo channel composed of PIEZO1 or PIEZO2; the interaction prolongs Piezo channel inactivation.

The protein resides in the nucleus. Its subcellular location is the cytoplasm. Inhibits the transactivation activity of the Myod family of myogenic factors and represses myogenesis. Acts by associating with Myod family members and retaining them in the cytoplasm by masking their nuclear localization signals. Can also interfere with the DNA-binding activity of Myod family members. Plays an important role in trophoblast and chondrogenic differentiation. Regulates the transcriptional activity of TCF7L1/TCF3 by interacting directly with TCF7L1/TCF3 and preventing it from binding DNA. Binds to the axin complex, resulting in an increase in the level of free beta-catenin. Affects axin regulation of the WNT and JNK signaling pathways. Regulates the activity of mechanosensitive Piezo channel. This Homo sapiens (Human) protein is MyoD family inhibitor (MDFI).